A 333-amino-acid chain; its full sequence is UDP-glucose 4-epimerase (333 aa).

NAD(+)-binding positions include 11-12 (YI), 32-37 (DSLVTG), 52-53 (DL), 75-79 (FAAYS), N94, T119, Y143, K147, and F171. Residues T119 and Y143 each coordinate substrate. Y143 serves as the catalytic Proton acceptor. Substrate contacts are provided by residues N172, 191–192 (HL), 208–210 (MIF), R223, and 284–287 (RSGD).

Belongs to the NAD(P)-dependent epimerase/dehydratase family. In terms of assembly, homodimer. The cofactor is NAD(+).

It catalyses the reaction UDP-alpha-D-glucose = UDP-alpha-D-galactose. Its pathway is carbohydrate metabolism; galactose metabolism. In terms of biological role, involved in the metabolism of galactose. Catalyzes the conversion of UDP-galactose (UDP-Gal) to UDP-glucose (UDP-Glc) through a mechanism involving the transient reduction of NAD. This chain is UDP-glucose 4-epimerase (galE), found in Streptococcus mutans serotype c (strain ATCC 700610 / UA159).